The chain runs to 211 residues: Metalloproteinase inhibitor 3 (211 aa).

Residues 1–23 (MTPWLGLVVLLGSWSLGDWGAEA) form the signal peptide. Cys-24 contacts Zn(2+). Involved in metalloproteinase-binding stretches follow at residues 24-27 (CTCS) and 88-89 (ES). Disulfide bonds link Cys-24–Cys-91, Cys-26–Cys-118, Cys-36–Cys-143, Cys-145–Cys-192, Cys-150–Cys-155, and Cys-163–Cys-184. The region spanning 24 to 143 (CTCSPSHPQD…GLNYRYHLGC (120 aa)) is the NTR domain. Positions 105-188 (TGRVYDGKMY…SKHYACIRQK (84 aa)) are mediates interaction with EFEMP1. N-linked (GlcNAc...) asparagine glycosylation occurs at Asn-207.

Belongs to the protease inhibitor I35 (TIMP) family. As to quaternary structure, interacts with EFEMP1. Interacts with KDR.

The protein resides in the secreted. The protein localises to the extracellular space. It is found in the extracellular matrix. In terms of biological role, mediates a variety of processes including matrix regulation and turnover, inflammation, and angiogenesis, through reversible inhibition of zinc protease superfamily enzymes, primarily matrix metalloproteinases (MMPs). Regulates extracellular matrix (ECM) remodeling through inhibition of matrix metalloproteinases (MMP) including MMP-1, MMP-2, MMP-3, MMP-7, MMP-9, MMP-13, MMP-14 and MMP-15. Additionally, modulates the processing of amyloid precursor protein (APP) and apolipoprotein E receptor ApoER2 by inhibiting two alpha-secretases ADAM10 and ADAM17. Functions as a tumor suppressor and a potent inhibitor of angiogenesis. Exerts its anti-angiogenic effect by directly interacting with vascular endothelial growth factor (VEGF) receptor-2/KDR, preventing its binding to the VEGFA ligand. Selectively induces apoptosis in angiogenic endothelial cells through a caspase-independent cell death pathway. Mechanistically, inhibits matrix-induced focal adhesion kinase PTK2 tyrosine phosphorylation and association with paxillin/PXN and disrupts the incorporation of ITGB3, PTK2 and PXN into focal adhesion contacts on the matrix. This is Metalloproteinase inhibitor 3 (TIMP3) from Equus caballus (Horse).